Reading from the N-terminus, the 115-residue chain is Ribonuclease P protein component (115 aa).

The protein belongs to the RnpA family. As to quaternary structure, consists of a catalytic RNA component (M1 or rnpB) and a protein subunit.

The catalysed reaction is Endonucleolytic cleavage of RNA, removing 5'-extranucleotides from tRNA precursor.. Its function is as follows. RNaseP catalyzes the removal of the 5'-leader sequence from pre-tRNA to produce the mature 5'-terminus. It can also cleave other RNA substrates such as 4.5S RNA. The protein component plays an auxiliary but essential role in vivo by binding to the 5'-leader sequence and broadening the substrate specificity of the ribozyme. The polypeptide is Ribonuclease P protein component (Bacillus cereus (strain ATCC 10987 / NRS 248)).